The sequence spans 299 residues: UPF0603 protein OsI_019212, chloroplastic (299 aa).

Low complexity-rich tracts occupy residues 1-14 and 22-36; these read METLLSPSTLLSPL and ASPAASASSSSSSPA. A chloroplast-targeting transit peptide spans 1–41; it reads METLLSPSTLLSPLRGSKKKPASPAASASSSSSSPARSVVS. Disordered stretches follow at residues 1-60 and 244-265; these read METL…WRGD and PDPGGPTFKDNKRESNFKTKEE. The N-terminal 57 residues, 42-98, are a transit peptide targeting the thylakoid; sequence CALRRQQPPPQAVAAWRGDGGRGGGVGSWATFLQHGLAAAALSLAISMAPAPAPAVA. Over residues 252-265 the composition is skewed to basic and acidic residues; that stretch reads KDNKRESNFKTKEE. A helical transmembrane segment spans residues 276 to 296; the sequence is VVGGLLVIAFVVPMAQYYAYI.

Belongs to the UPF0603 family.

Its subcellular location is the plastid. The protein localises to the chloroplast thylakoid membrane. This chain is UPF0603 protein OsI_019212, chloroplastic, found in Oryza sativa subsp. indica (Rice).